A 475-amino-acid chain; its full sequence is Ribulose bisphosphate carboxylase large chain (475 aa).

A propeptide spanning residues 1–2 (MS) is cleaved from the precursor. The residue at position 3 (Pro3) is an N-acetylproline. Lys14 is modified (N6,N6,N6-trimethyllysine). Substrate-binding residues include Asn123 and Thr173. The Proton acceptor role is filled by Lys175. Lys177 is a substrate binding site. The Mg(2+) site is built by Lys201, Asp203, and Glu204. Lys201 is subject to N6-carboxylysine. The active-site Proton acceptor is the His294. Residues Arg295, His327, and Ser379 each coordinate substrate.

Belongs to the RuBisCO large chain family. Type I subfamily. As to quaternary structure, heterohexadecamer of 8 large chains and 8 small chains; disulfide-linked. The disulfide link is formed within the large subunit homodimers. Mg(2+) is required as a cofactor. The disulfide bond which can form in the large chain dimeric partners within the hexadecamer appears to be associated with oxidative stress and protein turnover.

The protein resides in the plastid. It localises to the chloroplast. The catalysed reaction is 2 (2R)-3-phosphoglycerate + 2 H(+) = D-ribulose 1,5-bisphosphate + CO2 + H2O. It carries out the reaction D-ribulose 1,5-bisphosphate + O2 = 2-phosphoglycolate + (2R)-3-phosphoglycerate + 2 H(+). In terms of biological role, ruBisCO catalyzes two reactions: the carboxylation of D-ribulose 1,5-bisphosphate, the primary event in carbon dioxide fixation, as well as the oxidative fragmentation of the pentose substrate in the photorespiration process. Both reactions occur simultaneously and in competition at the same active site. This is Ribulose bisphosphate carboxylase large chain from Vitis vinifera (Grape).